The following is a 357-amino-acid chain: Trans-enoyl reductase resD (357 aa).

Tyr-211 provides a ligand contact to NADP(+).

This sequence belongs to the zinc-containing alcohol dehydrogenase family.

Its pathway is antifungal biosynthesis. In terms of biological role, trans-enoyl reductase; part of the gene cluster that mediates the biosynthesis of the tetrahydropyranyl antifungal agent restricticin that acts as an inhibitor of CYP51 and blocks the ergosterol biosynthesis. The highly reducing polyketide synthase resH, the short chain dehydrogenase resG, the cyclase resF, the FAD-dependent monooxygenase resA and the enoylreductase resD are required to generate the first stable intermediate desmethylrestrictinol. ResH with resD biosynthesize the first polyketide chain intermediate that is reduced by resG, followed by epoxidation by resA before 6-endo cyclization via epoxide opening by resF leads to desmethylrestrictinol. The methyltransferase resE then catalyzes the C4 O-methylation of desmethylrestrictinol to produce restrictinol, and the nonribosomal peptide synthetase resC catalyzes the C3 esterification of restrictinol with glycine that leads to restricticin. This is Trans-enoyl reductase resD from Aspergillus sclerotiorum.